An 87-amino-acid chain; its full sequence is UPF0473 protein PTH_1066 (87 aa).

The protein belongs to the UPF0473 family.

The protein is UPF0473 protein PTH_1066 of Pelotomaculum thermopropionicum (strain DSM 13744 / JCM 10971 / SI).